Here is a 231-residue protein sequence, read N- to C-terminus: 7-cyano-7-deazaguanine synthase (231 aa).

8 to 18 (FSGGQDSTTCL) is a binding site for ATP. Zn(2+) contacts are provided by cysteine 188, cysteine 197, cysteine 200, and cysteine 203.

The protein belongs to the QueC family. Requires Zn(2+) as cofactor.

The catalysed reaction is 7-carboxy-7-deazaguanine + NH4(+) + ATP = 7-cyano-7-deazaguanine + ADP + phosphate + H2O + H(+). It functions in the pathway purine metabolism; 7-cyano-7-deazaguanine biosynthesis. Its function is as follows. Catalyzes the ATP-dependent conversion of 7-carboxy-7-deazaguanine (CDG) to 7-cyano-7-deazaguanine (preQ(0)). In Escherichia coli O157:H7, this protein is 7-cyano-7-deazaguanine synthase.